Here is a 47-residue protein sequence, read N- to C-terminus: uncharacterized protein (47 aa).

An ATP-cone domain is found at 2–47 (LRVRKRDGRLEEFSRAKIVRTCLRAGASKKIAEKVAEELKRGYTMG).

This is an uncharacterized protein from Archaeoglobus fulgidus (strain ATCC 49558 / DSM 4304 / JCM 9628 / NBRC 100126 / VC-16).